Consider the following 229-residue polypeptide: 5'-methylthioadenosine/S-adenosylhomocysteine nucleosidase (229 aa).

Residue Glu12 is the Proton acceptor of the active site. Substrate contacts are provided by residues Gly78, Ile152, and 173–174; that span reads ME. The active-site Proton donor is the Asp197.

It belongs to the PNP/UDP phosphorylase family. MtnN subfamily.

The catalysed reaction is S-adenosyl-L-homocysteine + H2O = S-(5-deoxy-D-ribos-5-yl)-L-homocysteine + adenine. The enzyme catalyses S-methyl-5'-thioadenosine + H2O = 5-(methylsulfanyl)-D-ribose + adenine. It catalyses the reaction 5'-deoxyadenosine + H2O = 5-deoxy-D-ribose + adenine. The protein operates within amino-acid biosynthesis; L-methionine biosynthesis via salvage pathway; S-methyl-5-thio-alpha-D-ribose 1-phosphate from S-methyl-5'-thioadenosine (hydrolase route): step 1/2. Functionally, catalyzes the irreversible cleavage of the glycosidic bond in both 5'-methylthioadenosine (MTA) and S-adenosylhomocysteine (SAH/AdoHcy) to adenine and the corresponding thioribose, 5'-methylthioribose and S-ribosylhomocysteine, respectively. Also cleaves 5'-deoxyadenosine, a toxic by-product of radical S-adenosylmethionine (SAM) enzymes, into 5-deoxyribose and adenine. The protein is 5'-methylthioadenosine/S-adenosylhomocysteine nucleosidase of Baumannia cicadellinicola subsp. Homalodisca coagulata.